The sequence spans 299 residues: Probable lipid kinase YegS (299 aa).

The DAGKc domain occupies 2 to 133 (AEFPASLLIL…IDMAQVNKQT (132 aa)). ATP is bound by residues T40, 66–72 (GDGTINE), and T95. L215, D218, and L220 together coordinate Mg(2+). E271 acts as the Proton acceptor in catalysis.

The protein belongs to the diacylglycerol/lipid kinase family. YegS lipid kinase subfamily. The cofactor is Mg(2+). Ca(2+) serves as cofactor.

It localises to the cytoplasm. In terms of biological role, probably phosphorylates lipids; the in vivo substrate is unknown. This chain is Probable lipid kinase YegS, found in Escherichia coli O9:H4 (strain HS).